The primary structure comprises 230 residues: Cysteine S-methyltransferase OspZ (230 aa).

The interval 49 to 52 (GITR) is interaction with host proteins TAB2, TAB3 and ZRANB3. The S-adenosyl-L-methionine site is built by A92, S98, R107, Q111, Y204, and E208.

Belongs to the NleE/OspZ family. In terms of assembly, monomer.

Its subcellular location is the secreted. The protein resides in the host cytoplasm. The protein localises to the host nucleus. It catalyses the reaction L-cysteinyl-[protein] + S-adenosyl-L-methionine = S-methyl-L-cysteinyl-[protein] + S-adenosyl-L-homocysteine + H(+). Its function is as follows. Cysteine methyltransferase effector that inhibits host cell NF-kappa-B activation by preventing nuclear translocation of host protein RELA/p65. Acts by mediating cysteine methylation of host proteins TAB2 and TAB3: methylation of a conserved cysteine residue of the RanBP2-type zinc finger (NZF) of TAB2 and TAB3 disrupts zinc-binding, thereby inactivating the ubiquitin chain-binding activity of TAB2 and TAB3, leading to NF-kappa-B inactivation. Also mediates cysteine methylation of host protein ZRANB3, inactivating its ability to bind ubiquitin chains. The polypeptide is Cysteine S-methyltransferase OspZ (Shigella flexneri).